A 525-amino-acid chain; its full sequence is GMP synthase [glutamine-hydrolyzing] (525 aa).

The Glutamine amidotransferase type-1 domain maps to lysine 8–asparagine 207. Residue cysteine 85 is the Nucleophile of the active site. Catalysis depends on residues histidine 181 and glutamate 183. The 193-residue stretch at tryptophan 208–arginine 400 folds into the GMPS ATP-PPase domain. Position 235–241 (serine 235–serine 241) interacts with ATP.

Homodimer.

It catalyses the reaction XMP + L-glutamine + ATP + H2O = GMP + L-glutamate + AMP + diphosphate + 2 H(+). Its pathway is purine metabolism; GMP biosynthesis; GMP from XMP (L-Gln route): step 1/1. Functionally, catalyzes the synthesis of GMP from XMP. This Shewanella putrefaciens (strain CN-32 / ATCC BAA-453) protein is GMP synthase [glutamine-hydrolyzing].